The primary structure comprises 176 residues: Ribosome rescue factor SmrB (176 aa).

One can recognise a Smr domain in the interval 93 to 168 (LDLHGYRQSE…GDAALLVLID (76 aa)).

It belongs to the SmrB family. Associates with collided ribosomes, but not with correctly translating polysomes.

Functionally, acts as a ribosome collision sensor. Detects stalled/collided disomes (pairs of ribosomes where the leading ribosome is stalled and a second ribosome has collided with it) and endonucleolytically cleaves mRNA at the 5' boundary of the stalled ribosome. Stalled/collided disomes form a new interface (primarily via the 30S subunits) that binds SmrB. Cleaved mRNA becomes available for tmRNA ligation, leading to ribosomal subunit dissociation and rescue of stalled ribosomes. The chain is Ribosome rescue factor SmrB from Shewanella baltica (strain OS155 / ATCC BAA-1091).